The chain runs to 407 residues: Peptidase T (407 aa).

Position 78 (His-78) interacts with Zn(2+). Asp-80 is a catalytic residue. Asp-139 is a Zn(2+) binding site. The active-site Proton acceptor is the Glu-173. Positions 174, 196, and 378 each coordinate Zn(2+).

The protein belongs to the peptidase M20B family. Zn(2+) serves as cofactor.

The protein localises to the cytoplasm. It catalyses the reaction Release of the N-terminal residue from a tripeptide.. Its function is as follows. Cleaves the N-terminal amino acid of tripeptides. The sequence is that of Peptidase T from Shewanella halifaxensis (strain HAW-EB4).